The sequence spans 841 residues: MEQGVIERARELRRRIENADHRYYDLADPEITDAQYDQLFRELQELEQKYPELVTADSPSMRVGGAVRKSFVKVRHSIPMLSLANAFDEVEVKNFVDRIFRRMGSSNPLEFSVEPKFDGLAISLRYELGKFVQGVTRGDGDVGEDVSENIRTIRSVPLKLKGNNVPAILEVRGEVYMPRDGFSEFNKRAMARGEKLLANPRNGAAGSLRQLDSRISAQRPLSFFAYGVGLIQVEQDLFEEIPQSIASTHSAMLAQLRAWGFPVSSLVEVVQGSDGLLAYYQRIGEARDGLPFDIDGVVYKLDDLAGQREMGFVSRAPRWALAHKFPAQEQSTTVEAIEIQIGRTGAATPVARLKPVHVAGVIVTNATLHNADQIARLDVRVGDTVIVRRAGDVIPEVAAVVADQRPPATQSWQMPTQCPVCGSEIVREEGQAVWRCSGELTCPAQRKEAFRHFVSRRAMDVDGLGEKFIEVLVDSGVVQGVADLYLLTVDQLLQLRMISTAESPHAFLREAREHLASGAYAQLEATLVGIGVDLAGEREVPQTWQADLLRAGLPTFDWNRKKIATKWAENLIEAIETSRDTTLERFLFALGIEHVGESTAKALSAWFGDLDLIRHLPWPLFKRVPDIGGEVARSLGHFFDQPGNQKAIDHLLARKVRIGDTHPPSPKLRGELRLANLLEDLEIPKVTPIRAAQIATAFGSIDALRNGGPEPLVEAGVPQSVAESLATWLLVPANDTLAVNAQKKLSALLAMMPEAGEEKTGPLDGQTVVITGTLAALTRDAAKQRLEALGAKVAGSVSKKTAFLVAGEEAGSKLDKAQSLGVEIWDEARLLAFLGEHGQQR.

NAD(+) is bound by residues 33–37, 82–83, and Glu-114; these read DAQYD and SL. The active-site N6-AMP-lysine intermediate is Lys-116. Arg-137, Glu-174, Lys-300, and Lys-324 together coordinate NAD(+). 4 residues coordinate Zn(2+): Cys-418, Cys-421, Cys-436, and Cys-442. The BRCT domain occupies 758–841; it reads EKTGPLDGQT…AFLGEHGQQR (84 aa).

It belongs to the NAD-dependent DNA ligase family. LigA subfamily. It depends on Mg(2+) as a cofactor. Requires Mn(2+) as cofactor.

The enzyme catalyses NAD(+) + (deoxyribonucleotide)n-3'-hydroxyl + 5'-phospho-(deoxyribonucleotide)m = (deoxyribonucleotide)n+m + AMP + beta-nicotinamide D-nucleotide.. Its function is as follows. DNA ligase that catalyzes the formation of phosphodiester linkages between 5'-phosphoryl and 3'-hydroxyl groups in double-stranded DNA using NAD as a coenzyme and as the energy source for the reaction. It is essential for DNA replication and repair of damaged DNA. This chain is DNA ligase, found in Xanthomonas oryzae pv. oryzae (strain MAFF 311018).